The chain runs to 562 residues: Probable sesquiterpene synthase (562 aa).

Mg(2+) contacts are provided by Asp315, Asp319, and Glu467. The DDXXD motif motif lies at Asp315–Asp319.

It belongs to the terpene synthase family. Tpsa subfamily. Mg(2+) serves as cofactor. Mn(2+) is required as a cofactor.

Functionally, sesquiterpene synthase. The protein is Probable sesquiterpene synthase (SesquiTPS) of Santalum austrocaledonicum (Sandalwood).